The following is a 61-amino-acid chain: Large ribosomal subunit protein uL30 (61 aa).

This sequence belongs to the universal ribosomal protein uL30 family. As to quaternary structure, part of the 50S ribosomal subunit.

In Rhizorhabdus wittichii (strain DSM 6014 / CCUG 31198 / JCM 15750 / NBRC 105917 / EY 4224 / RW1) (Sphingomonas wittichii), this protein is Large ribosomal subunit protein uL30.